A 175-amino-acid polypeptide reads, in one-letter code: Alkyl hydroperoxide reductase AhpD (175 aa).

The Proton donor role is filled by cysteine 131. Residues cysteine 131 and cysteine 134 are joined by a disulfide bond. The Cysteine sulfenic acid (-SOH) intermediate role is filled by cysteine 134.

It belongs to the AhpD family.

The catalysed reaction is N(6)-[(R)-dihydrolipoyl]-L-lysyl-[lipoyl-carrier protein] + a hydroperoxide = N(6)-[(R)-lipoyl]-L-lysyl-[lipoyl-carrier protein] + an alcohol + H2O. Its function is as follows. Antioxidant protein with alkyl hydroperoxidase activity. Required for the reduction of the AhpC active site cysteine residues and for the regeneration of the AhpC enzyme activity. The protein is Alkyl hydroperoxide reductase AhpD of Brucella abortus (strain 2308).